Reading from the N-terminus, the 1366-residue chain is DNA-directed RNA polymerase subunit beta' (1366 aa).

Over residues 1–20 the composition is skewed to basic residues; sequence MTSSKPKKTSRVRKTTKNSK. The tract at residues 1-37 is disordered; the sequence is MTSSKPKKTSRVRKTTKNSKKNNPVTMPVLPKTPPSF. Cysteine 248, cysteine 315, cysteine 322, and cysteine 325 together coordinate Zn(2+). The segment at 1292–1366 is disordered; the sequence is TVDMPQSPAV…LQEEGLLSDE (75 aa). Over residues 1354 to 1366 the composition is skewed to low complexity; the sequence is LEGLQEEGLLSDE.

Belongs to the RNA polymerase beta' chain family. RpoC2 subfamily. In terms of assembly, in cyanobacteria the RNAP catalytic core is composed of 2 alpha, 1 beta, 1 beta', 1 gamma and 1 omega subunit. When a sigma factor is associated with the core the holoenzyme is formed, which can initiate transcription. The cofactor is Zn(2+).

It carries out the reaction RNA(n) + a ribonucleoside 5'-triphosphate = RNA(n+1) + diphosphate. Functionally, DNA-dependent RNA polymerase catalyzes the transcription of DNA into RNA using the four ribonucleoside triphosphates as substrates. This chain is DNA-directed RNA polymerase subunit beta', found in Prochlorococcus marinus (strain MIT 9215).